The primary structure comprises 497 residues: COP9 signalosome complex subunit 3 (497 aa).

The region spanning 233–408 (QAFDAFERCV…DGSPAYLTFL (176 aa)) is the PCI domain.

The protein belongs to the CSN3 family. In terms of assembly, component of the COP9 signalosome (CSN) complex.

The protein localises to the cytoplasm. Its subcellular location is the nucleus. Functionally, component of the COP9 signalosome (CSN) complex that acts as an regulator of the ubiquitin (Ubl) conjugation pathway by mediating the deneddylation of the cullin subunit of SCF-type E3 ubiquitin-protein ligase complexes. The CSN complex is involved in the regulation of the circadian clock through its control of the stability of the SCF(FWD1) complex. The protein is COP9 signalosome complex subunit 3 (csn-3) of Neurospora crassa (strain ATCC 24698 / 74-OR23-1A / CBS 708.71 / DSM 1257 / FGSC 987).